A 745-amino-acid chain; its full sequence is DNA ligase (745 aa).

Residues 1–27 form a disordered region; that stretch reads MRNHGPGSERKDACVSAPDPTFSDDVP. NAD(+) is bound by residues 57 to 61, 106 to 107, and E135; these read DAEYD and SL. The N6-AMP-lysine intermediate role is filled by K137. NAD(+)-binding residues include R158 and E197. Positions 216–235 are disordered; sequence GKPPFANPRNAAAGSLRQKD. Residues K313 and K337 each contribute to the NAD(+) site. Zn(2+) contacts are provided by C431, C434, C450, and C456. Residues 649-738 form the BRCT domain; that stretch reads DGPRLLDGIT…PEAARAARLS (90 aa).

This sequence belongs to the NAD-dependent DNA ligase family. LigA subfamily. Requires Mg(2+) as cofactor. Mn(2+) is required as a cofactor.

It catalyses the reaction NAD(+) + (deoxyribonucleotide)n-3'-hydroxyl + 5'-phospho-(deoxyribonucleotide)m = (deoxyribonucleotide)n+m + AMP + beta-nicotinamide D-nucleotide.. In terms of biological role, DNA ligase that catalyzes the formation of phosphodiester linkages between 5'-phosphoryl and 3'-hydroxyl groups in double-stranded DNA using NAD as a coenzyme and as the energy source for the reaction. It is essential for DNA replication and repair of damaged DNA. This chain is DNA ligase, found in Thermobifida fusca (strain YX).